We begin with the raw amino-acid sequence, 439 residues long: Methionine aminopeptidase 2-2 (439 aa).

Positions 1-90 are disordered; that stretch reads MAAQTTEKLD…RVPVSNLFPN (90 aa). Over residues 28–41 the composition is skewed to acidic residues; it reads EAEEDSDDAQDEGA. Over residues 56–72 the composition is skewed to basic residues; the sequence is KKKKKKKPKKKSKKKGG. Histidine 196 lines the substrate pocket. Aspartate 216, aspartate 227, and histidine 296 together coordinate a divalent metal cation. Residue histidine 304 participates in substrate binding. A divalent metal cation contacts are provided by glutamate 329 and glutamate 424.

Belongs to the peptidase M24A family. Methionine aminopeptidase eukaryotic type 2 subfamily. Requires Co(2+) as cofactor. The cofactor is Zn(2+). Mn(2+) serves as cofactor. Fe(2+) is required as a cofactor.

The protein localises to the cytoplasm. It carries out the reaction Release of N-terminal amino acids, preferentially methionine, from peptides and arylamides.. Its function is as follows. Cotranslationally removes the N-terminal methionine from nascent proteins. The N-terminal methionine is often cleaved when the second residue in the primary sequence is small and uncharged (Met-Ala-, Cys, Gly, Pro, Ser, Thr, or Val). The chain is Methionine aminopeptidase 2-2 from Penicillium rubens (strain ATCC 28089 / DSM 1075 / NRRL 1951 / Wisconsin 54-1255) (Penicillium chrysogenum).